Consider the following 180-residue polypeptide: Capsid assembly scaffolding protein (180 aa).

This sequence belongs to the SPP1-like scaffolding protein family. Homodimer.

In terms of biological role, scaffolding protein involved in the icosahedric procapsid assembly. Coassembles with the capsid proteins to form the procapsid, in which the scaffolding protein is found within the external shell of icosahedrally arranged capsid protein subunits. In a subsequent step the scaffolding protein molecules are released from the procapsid. This Lactococcus phage mv4 (Lactococcus delbrueckii bacteriophage mv4) protein is Capsid assembly scaffolding protein (g20).